We begin with the raw amino-acid sequence, 320 residues long: Lipoyl synthase (320 aa).

Residues cysteine 67, cysteine 72, cysteine 78, cysteine 93, cysteine 97, cysteine 100, and serine 307 each coordinate [4Fe-4S] cluster. The Radical SAM core domain occupies 79–296 (FNHGTATFMI…REKANEMGFE (218 aa)).

The protein belongs to the radical SAM superfamily. Lipoyl synthase family. Requires [4Fe-4S] cluster as cofactor.

It is found in the cytoplasm. The enzyme catalyses [[Fe-S] cluster scaffold protein carrying a second [4Fe-4S](2+) cluster] + N(6)-octanoyl-L-lysyl-[protein] + 2 oxidized [2Fe-2S]-[ferredoxin] + 2 S-adenosyl-L-methionine + 4 H(+) = [[Fe-S] cluster scaffold protein] + N(6)-[(R)-dihydrolipoyl]-L-lysyl-[protein] + 4 Fe(3+) + 2 hydrogen sulfide + 2 5'-deoxyadenosine + 2 L-methionine + 2 reduced [2Fe-2S]-[ferredoxin]. It participates in protein modification; protein lipoylation via endogenous pathway; protein N(6)-(lipoyl)lysine from octanoyl-[acyl-carrier-protein]: step 2/2. Its function is as follows. Catalyzes the radical-mediated insertion of two sulfur atoms into the C-6 and C-8 positions of the octanoyl moiety bound to the lipoyl domains of lipoate-dependent enzymes, thereby converting the octanoylated domains into lipoylated derivatives. This chain is Lipoyl synthase, found in Glaesserella parasuis serovar 5 (strain SH0165) (Haemophilus parasuis).